Here is a 350-residue protein sequence, read N- to C-terminus: Small ribosomal subunit biogenesis GTPase RsgA (350 aa).

Over residues 1 to 17 (MSKNKLSKGQQRRVNAN) the composition is skewed to polar residues. Positions 1–33 (MSKNKLSKGQQRRVNANHQRRLKTSKEKPDYDD) are disordered. The region spanning 104 to 273 (TSVLTRPDFY…VIDSPGVREF (170 aa)) is the CP-type G domain. Residues 160-163 (NKID) and 214-222 (GQSGVGKSS) each bind GTP. Positions 297, 302, 304, and 310 each coordinate Zn(2+).

It belongs to the TRAFAC class YlqF/YawG GTPase family. RsgA subfamily. In terms of assembly, monomer. Associates with 30S ribosomal subunit, binds 16S rRNA. It depends on Zn(2+) as a cofactor.

The protein localises to the cytoplasm. Functionally, one of several proteins that assist in the late maturation steps of the functional core of the 30S ribosomal subunit. Helps release RbfA from mature subunits. May play a role in the assembly of ribosomal proteins into the subunit. Circularly permuted GTPase that catalyzes slow GTP hydrolysis, GTPase activity is stimulated by the 30S ribosomal subunit. In Escherichia fergusonii (strain ATCC 35469 / DSM 13698 / CCUG 18766 / IAM 14443 / JCM 21226 / LMG 7866 / NBRC 102419 / NCTC 12128 / CDC 0568-73), this protein is Small ribosomal subunit biogenesis GTPase RsgA.